The primary structure comprises 509 residues: ATP synthase subunit alpha (509 aa).

G169–T176 contacts ATP.

This sequence belongs to the ATPase alpha/beta chains family. As to quaternary structure, F-type ATPases have 2 components, CF(1) - the catalytic core - and CF(0) - the membrane proton channel. CF(1) has five subunits: alpha(3), beta(3), gamma(1), delta(1), epsilon(1). CF(0) has three main subunits: a(1), b(2) and c(9-12). The alpha and beta chains form an alternating ring which encloses part of the gamma chain. CF(1) is attached to CF(0) by a central stalk formed by the gamma and epsilon chains, while a peripheral stalk is formed by the delta and b chains.

The protein localises to the cell inner membrane. The catalysed reaction is ATP + H2O + 4 H(+)(in) = ADP + phosphate + 5 H(+)(out). Produces ATP from ADP in the presence of a proton gradient across the membrane. The alpha chain is a regulatory subunit. The protein is ATP synthase subunit alpha of Parvibaculum lavamentivorans (strain DS-1 / DSM 13023 / NCIMB 13966).